Reading from the N-terminus, the 188-residue chain is Probable nicotinate-nucleotide adenylyltransferase (188 aa).

The protein belongs to the NadD family.

The enzyme catalyses nicotinate beta-D-ribonucleotide + ATP + H(+) = deamido-NAD(+) + diphosphate. The protein operates within cofactor biosynthesis; NAD(+) biosynthesis; deamido-NAD(+) from nicotinate D-ribonucleotide: step 1/1. In terms of biological role, catalyzes the reversible adenylation of nicotinate mononucleotide (NaMN) to nicotinic acid adenine dinucleotide (NaAD). This is Probable nicotinate-nucleotide adenylyltransferase from Salinispora tropica (strain ATCC BAA-916 / DSM 44818 / JCM 13857 / NBRC 105044 / CNB-440).